The following is a 464-amino-acid chain: Soluble pyridine nucleotide transhydrogenase (464 aa).

FAD is bound at residue Asp-35–Cys-44.

This sequence belongs to the class-I pyridine nucleotide-disulfide oxidoreductase family. The cofactor is FAD.

Its subcellular location is the cytoplasm. The enzyme catalyses NAD(+) + NADPH = NADH + NADP(+). Conversion of NADPH, generated by peripheral catabolic pathways, to NADH, which can enter the respiratory chain for energy generation. The chain is Soluble pyridine nucleotide transhydrogenase from Pseudomonas putida (strain ATCC 47054 / DSM 6125 / CFBP 8728 / NCIMB 11950 / KT2440).